A 1937-amino-acid polypeptide reads, in one-letter code: Myosin-2 (1937 aa).

In terms of domain architecture, Myosin N-terminal SH3-like spans 33-82; it reads DAKTSVFVAEPKESFVKGTIQSREGGKVTVKTDAGATLTVKEDQVFPMNP. Phosphothreonine is present on residues T64 and T69. A Myosin motor domain is found at 86-780; it reads DKIEDMAMMT…LLGLLEEMRD (695 aa). K130 carries the N6,N6,N6-trimethyllysine modification. 179-186 lines the ATP pocket; the sequence is GESGAGKT. A Phosphotyrosine modification is found at Y387. T417 is modified (phosphothreonine). S623 is modified (phosphoserine). The tract at residues 657-679 is actin-binding; the sequence is LNKLMTNLRSTHPHFVRCIIPNE. Residue H755 is modified to Pros-methylhistidine. The segment at 759 to 773 is actin-binding; that stretch reads KFGHTKVFFKAGLLG. An IQ domain is found at 783–812; that stretch reads LAQIITRTQARCRGFLARVEYQKMVERRES. Positions 841-1937 form a coiled coil; it reads LLKSAETEKE…EVHTKIISEE (1097 aa). Phosphoserine is present on S1094. 2 disordered regions span residues 1124–1145 and 1151–1170; these read IEAE…SREL and RLEE…KKRE. The span at 1126–1145 shows a compositional bias: basic and acidic residues; that stretch reads AERASRAKAEKQRSDLSREL. Residues S1160 and S1235 each carry the phosphoserine modification. T1239 is modified (phosphothreonine). S1241 is modified (phosphoserine). Residue T1253 is modified to Phosphothreonine. S1259 carries the phosphoserine modification. T1284 is subject to Phosphothreonine. A phosphoserine mark is found at S1290, S1301, and S1304. Y1462 carries the phosphotyrosine modification. Residue T1465 is modified to Phosphothreonine. A Phosphoserine modification is found at S1472. At Y1490 the chain carries Phosphotyrosine. At S1493 the chain carries Phosphoserine. The residue at position 1499 (T1499) is a Phosphothreonine. S1512 carries the post-translational modification Phosphoserine. A Phosphothreonine modification is found at T1515. Residues S1540, S1552, S1572, S1712, and S1724 each carry the phosphoserine modification. Phosphothreonine occurs at positions 1728 and 1734. A Phosphoserine modification is found at S1737. The segment at 1883-1913 is disordered; that stretch reads QAEEAEEQSNTNLSKFRKLQHELEEAEERAD.

The protein belongs to the TRAFAC class myosin-kinesin ATPase superfamily. Myosin family. As to quaternary structure, muscle myosin is a hexameric protein that consists of 2 heavy chain subunits (MHC), 2 alkali light chain subunits (MLC) and 2 regulatory light chain subunits (MLC-2). Interacts with GCSAM.

It localises to the cytoplasm. The protein localises to the myofibril. Myosins are actin-based motor molecules with ATPase activity essential for muscle contraction. The sequence is that of Myosin-2 (MYH2) from Equus caballus (Horse).